A 330-amino-acid chain; its full sequence is Methionyl-tRNA formyltransferase (330 aa).

112 to 115 (SLLP) contacts (6S)-5,6,7,8-tetrahydrofolate.

Belongs to the Fmt family.

The catalysed reaction is L-methionyl-tRNA(fMet) + (6R)-10-formyltetrahydrofolate = N-formyl-L-methionyl-tRNA(fMet) + (6S)-5,6,7,8-tetrahydrofolate + H(+). Attaches a formyl group to the free amino group of methionyl-tRNA(fMet). The formyl group appears to play a dual role in the initiator identity of N-formylmethionyl-tRNA by promoting its recognition by IF2 and preventing the misappropriation of this tRNA by the elongation apparatus. The polypeptide is Methionyl-tRNA formyltransferase (Alcanivorax borkumensis (strain ATCC 700651 / DSM 11573 / NCIMB 13689 / SK2)).